Consider the following 142-residue polypeptide: Aspartate 1-decarboxylase (142 aa).

Ser25 serves as the catalytic Schiff-base intermediate with substrate; via pyruvic acid. Ser25 carries the pyruvic acid (Ser) modification. Thr57 contributes to the substrate binding site. Residue Tyr58 is the Proton donor of the active site. 73–75 (GAA) contacts substrate.

It belongs to the PanD family. Heterooctamer of four alpha and four beta subunits. Pyruvate serves as cofactor. Is synthesized initially as an inactive proenzyme, which is activated by self-cleavage at a specific serine bond to produce a beta-subunit with a hydroxyl group at its C-terminus and an alpha-subunit with a pyruvoyl group at its N-terminus.

Its subcellular location is the cytoplasm. The catalysed reaction is L-aspartate + H(+) = beta-alanine + CO2. It functions in the pathway cofactor biosynthesis; (R)-pantothenate biosynthesis; beta-alanine from L-aspartate: step 1/1. Its function is as follows. Catalyzes the pyruvoyl-dependent decarboxylation of aspartate to produce beta-alanine. This Mycobacterium leprae (strain Br4923) protein is Aspartate 1-decarboxylase.